The following is a 714-amino-acid chain: Fatty acid oxidation complex subunit alpha (714 aa).

An enoyl-CoA hydratase region spans residues 1 to 190; the sequence is MEMASAFTLN…KLGLVDDVVP (190 aa). The interval 306-714 is 3-hydroxyacyl-CoA dehydrogenase; the sequence is APLNSVGILG…FWKTTATDLQ (409 aa).

This sequence in the N-terminal section; belongs to the enoyl-CoA hydratase/isomerase family. It in the central section; belongs to the 3-hydroxyacyl-CoA dehydrogenase family. Heterotetramer of two alpha chains (FadJ) and two beta chains (FadI).

It localises to the cytoplasm. It carries out the reaction a (3S)-3-hydroxyacyl-CoA = a (2E)-enoyl-CoA + H2O. It catalyses the reaction a 4-saturated-(3S)-3-hydroxyacyl-CoA = a (3E)-enoyl-CoA + H2O. The enzyme catalyses a (3S)-3-hydroxyacyl-CoA + NAD(+) = a 3-oxoacyl-CoA + NADH + H(+). The catalysed reaction is (3S)-3-hydroxybutanoyl-CoA = (3R)-3-hydroxybutanoyl-CoA. Its pathway is lipid metabolism; fatty acid beta-oxidation. Functionally, catalyzes the formation of a hydroxyacyl-CoA by addition of water on enoyl-CoA. Also exhibits 3-hydroxyacyl-CoA epimerase and 3-hydroxyacyl-CoA dehydrogenase activities. In Escherichia coli O45:K1 (strain S88 / ExPEC), this protein is Fatty acid oxidation complex subunit alpha.